We begin with the raw amino-acid sequence, 315 residues long: Protein-export membrane protein SecF (315 aa).

The next 6 membrane-spanning stretches (helical) occupy residues 35-55 (MVLY…VHFP), 152-172 (QGIK…FLFF), 181-201 (IIFS…ILGI), 205-225 (TATI…NILL), 242-264 (LSAV…ILWL), and 282-302 (LLAD…WYIA).

The protein belongs to the SecD/SecF family. SecF subfamily. Part of the protein translocation apparatus. Forms a complex with SecD.

It is found in the cell membrane. In terms of biological role, involved in protein export. This Thermococcus gammatolerans (strain DSM 15229 / JCM 11827 / EJ3) protein is Protein-export membrane protein SecF.